The primary structure comprises 126 residues: Glycine cleavage system H protein (126 aa).

In terms of domain architecture, Lipoyl-binding spans 22-104 (VAYVGITDYA…YGEGWLIKMK (83 aa)). An N6-lipoyllysine modification is found at K63.

Belongs to the GcvH family. As to quaternary structure, the glycine cleavage system is composed of four proteins: P, T, L and H. (R)-lipoate is required as a cofactor.

In terms of biological role, the glycine cleavage system catalyzes the degradation of glycine. The H protein shuttles the methylamine group of glycine from the P protein to the T protein. In Bacteroides fragilis (strain ATCC 25285 / DSM 2151 / CCUG 4856 / JCM 11019 / LMG 10263 / NCTC 9343 / Onslow / VPI 2553 / EN-2), this protein is Glycine cleavage system H protein.